The following is a 93-amino-acid chain: Acylphosphatase (93 aa).

Residues cysteine 5 and cysteine 49 are joined by a disulfide bond. Residues 5–93 (CIIAWVYGRV…ETLTGFSIRY (89 aa)) form the Acylphosphatase-like domain. Asparagine 38 is a catalytic residue.

Belongs to the acylphosphatase family.

It catalyses the reaction an acyl phosphate + H2O = a carboxylate + phosphate + H(+). In Salmonella paratyphi A (strain ATCC 9150 / SARB42), this protein is Acylphosphatase.